A 209-amino-acid chain; its full sequence is Superoxide dismutase [Mn/Fe] (209 aa).

Residues His-38, His-90, Asp-172, and His-176 each contribute to the Fe(3+) site. Mn(2+) is bound by residues His-38, His-90, Asp-172, and His-176.

Belongs to the iron/manganese superoxide dismutase family. Requires Mn(2+) as cofactor. It depends on Fe(3+) as a cofactor.

The enzyme catalyses 2 superoxide + 2 H(+) = H2O2 + O2. Functionally, destroys superoxide anion radicals which are normally produced within the cells and which are toxic to biological systems. Catalyzes the dismutation of superoxide anion radicals into O2 and H2O2 by successive reduction and oxidation of the transition metal ion at the active site. This is Superoxide dismutase [Mn/Fe] (sodB) from Rickettsia conorii (strain ATCC VR-613 / Malish 7).